The sequence spans 527 residues: MASQEKASMAGHMFDVVVIGGGISGLSAAKLLAEHETNVLVLEARDRVGGRTYTVRNKHVNYVDVGGAYVGPTQNRILRLSKELGLETYKVNVNERLVQYVKGKSYPFRGAFPPVWNPIAYLDYNNLWRTMDNMGKEIPADAPWEAPHAEEWDKMTMKDLIDKICWTKTARQFASLFVNINVTSEPHQVSALWFLWYVKQCGGTTRIFSITNGGQERKFVGGSGQVSERIMELLGDRVKLEHPVTYVDQSGDNIIVETLNHEHFECKYVISAIPPALTAKIHFKPELPSERNQLIQRLPMGAIIKCMMYYKEAFWKKKDYCGSMIIEDEEAPISITLDDSKPDGSLPAIMGFILARKADRLAKLHKEMRKKKICELYAKVLGSQEALQPVHYEEKNWCEEQYSGGCYTAYFPPGIMTQYGRVIRQPVGRIYFAGTETATRWSGYMEGAVEAGERAAREILNALGKVAEKDIWLQEPESKDVPAVEITHSFWERNLPSVGGLLKIIGFSTSITALWIVVYKFKLLTRS.

M1 carries the post-translational modification N-acetylmethionine. Residues 1–497 are Cytoplasmic-facing; that stretch reads MASQEKASMA…HSFWERNLPS (497 aa). S383 is modified (phosphoserine). C406 is subject to S-8alpha-FAD cysteine. A helical; Anchor for type IV membrane protein membrane pass occupies residues 498–518; it reads VGGLLKIIGFSTSITALWIVV. Over 519-527 the chain is Mitochondrial intermembrane; sequence YKFKLLTRS. An interaction with membrane phospholipid headgroups region spans residues 520–522; the sequence is KFK.

Belongs to the flavin monoamine oxidase family. As to quaternary structure, monomer, homo- or heterodimer (containing two subunits of similar size). Each subunit contains a covalently bound flavin. Enzymatically active as monomer. It depends on FAD as a cofactor.

It is found in the mitochondrion outer membrane. The enzyme catalyses a secondary aliphatic amine + O2 + H2O = a primary amine + an aldehyde + H2O2. The catalysed reaction is a primary methyl amine + O2 + H2O = an aldehyde + H2O2 + NH4(+). It carries out the reaction (R)-adrenaline + O2 + H2O = (R)-3,4-dihydroxymandelaldehyde + methylamine + H2O2. It catalyses the reaction dopamine + O2 + H2O = 3,4-dihydroxyphenylacetaldehyde + H2O2 + NH4(+). The enzyme catalyses tyramine + O2 + H2O = (4-hydroxyphenyl)acetaldehyde + H2O2 + NH4(+). The catalysed reaction is (R)-noradrenaline + O2 + H2O = (R)-3,4-dihydroxymandelaldehyde + H2O2 + NH4(+). It carries out the reaction serotonin + O2 + H2O = (5-hydroxyindol-3-yl)acetaldehyde + H2O2 + NH4(+). It catalyses the reaction kynuramine + O2 + H2O = 3-(2-aminophenyl)-3-oxopropanal + H2O2 + NH4(+). The enzyme catalyses tryptamine + O2 + H2O = indole-3-acetaldehyde + H2O2 + NH4(+). The catalysed reaction is 2-phenylethylamine + O2 + H2O = 2-phenylacetaldehyde + H2O2 + NH4(+). In terms of biological role, catalyzes the oxidative deamination of primary and some secondary amine such as neurotransmitters, with concomitant reduction of oxygen to hydrogen peroxide and has important functions in the metabolism of neuroactive and vasoactive amines in the central nervous system and peripheral tissues. Preferentially oxidizes serotonin. Also catalyzes the oxidative deamination of kynuramine to 3-(2-aminophenyl)-3-oxopropanal that can spontaneously condense to 4-hydroxyquinoline. This Equus caballus (Horse) protein is Amine oxidase [flavin-containing] A.